The chain runs to 411 residues: MVVINNVKMACMKCIRGHRSSTCKHNDRELFPIRPKGRPISQCEKCRIARITRHLHVKCTCNSRKKGSKCSTSSTTDLDSSSASNSSCSIPSSISEKLLPRDNVKTHCPKRSASCCGKKPDVMPLKINLESQTDFMGMPLQSQRPHSESYRMLPEPEKFKSEYGYPSQFLPIEKLTSNVAYPPNYNNYLKSPYQQPTNFPPEIQYNYSHSPQHSIQEAEEAAVYGPPVYRSGYQILYNNNTDSIAAAAATHDLYPQPDVPLTFAMLADGNYVPLPSSTNTYGPSNSYGYEININESTNHVDSSYLPHPIQLSNYFTLPSSCAQADAACQCGDNCECLGCLTHPNNATTLAALNHISALEKETISHTDLHHTFKHEVNSSNNYELTNDELAASSPLYTSSSVPPSHITTGST.

Residues methionine 1–isoleucine 40 constitute a DNA-binding region (copper-fist). Positions 11, 14, 23, and 25 each coordinate Zn(2+). A disordered region spans residues serine 63–serine 92. The span at lysine 69–serine 92 shows a compositional bias: low complexity.

Its subcellular location is the cytoplasm. It is found in the nucleus. Its function is as follows. Copper-sensing transcription factor that regulates iron uptake genes. Under copper starvation conditions activates the transcription of the copper transport genes, ctr4, ctr5 and ctr6. This Schizosaccharomyces pombe (strain 972 / ATCC 24843) (Fission yeast) protein is Metal-binding regulatory protein cuf1 (cuf1).